A 360-amino-acid polypeptide reads, in one-letter code: Phosphoserine aminotransferase (360 aa).

Position 42 (arginine 42) interacts with L-glutamate. Pyridoxal 5'-phosphate contacts are provided by residues 76–77 (AR), tryptophan 102, threonine 152, aspartate 172, and glutamine 195. Lysine 196 bears the N6-(pyridoxal phosphate)lysine mark. 237 to 238 (NT) is a pyridoxal 5'-phosphate binding site.

This sequence belongs to the class-V pyridoxal-phosphate-dependent aminotransferase family. SerC subfamily. Homodimer. Pyridoxal 5'-phosphate is required as a cofactor.

It is found in the cytoplasm. The enzyme catalyses O-phospho-L-serine + 2-oxoglutarate = 3-phosphooxypyruvate + L-glutamate. The catalysed reaction is 4-(phosphooxy)-L-threonine + 2-oxoglutarate = (R)-3-hydroxy-2-oxo-4-phosphooxybutanoate + L-glutamate. The protein operates within amino-acid biosynthesis; L-serine biosynthesis; L-serine from 3-phospho-D-glycerate: step 2/3. It participates in cofactor biosynthesis; pyridoxine 5'-phosphate biosynthesis; pyridoxine 5'-phosphate from D-erythrose 4-phosphate: step 3/5. In terms of biological role, catalyzes the reversible conversion of 3-phosphohydroxypyruvate to phosphoserine and of 3-hydroxy-2-oxo-4-phosphonooxybutanoate to phosphohydroxythreonine. This is Phosphoserine aminotransferase from Pasteurella multocida (strain Pm70).